Reading from the N-terminus, the 1524-residue chain is DNA-directed RNA polymerase subunit beta' (1524 aa).

Residues Cys58, Cys60, Cys73, and Cys76 each contribute to the Zn(2+) site. Residues Asp739, Asp741, and Asp743 each contribute to the Mg(2+) site. Residues Cys1112, Cys1194, Cys1201, and Cys1204 each contribute to the Zn(2+) site. Positions 1502 to 1524 (AVEAKEKEAPRRPVRREQPGKGL) are disordered.

The protein belongs to the RNA polymerase beta' chain family. The RNAP catalytic core consists of 2 alpha, 1 beta, 1 beta' and 1 omega subunit. When a sigma factor is associated with the core the holoenzyme is formed, which can initiate transcription. It depends on Mg(2+) as a cofactor. The cofactor is Zn(2+).

It carries out the reaction RNA(n) + a ribonucleoside 5'-triphosphate = RNA(n+1) + diphosphate. In terms of biological role, DNA-dependent RNA polymerase catalyzes the transcription of DNA into RNA using the four ribonucleoside triphosphates as substrates. The sequence is that of DNA-directed RNA polymerase subunit beta' from Thermus aquaticus.